Here is a 213-residue protein sequence, read N- to C-terminus: Cytochrome c biogenesis ATP-binding export protein CcmA (213 aa).

The 203-residue stretch at 11–213 (LTARNLECIR…TVTVHHLVLS (203 aa)) folds into the ABC transporter domain. Residue 43-50 (GPNGSGKT) coordinates ATP.

It belongs to the ABC transporter superfamily. CcmA exporter (TC 3.A.1.107) family. In terms of assembly, the complex is composed of two ATP-binding proteins (CcmA) and two transmembrane proteins (CcmB).

Its subcellular location is the cell inner membrane. It carries out the reaction heme b(in) + ATP + H2O = heme b(out) + ADP + phosphate + H(+). Functionally, part of the ABC transporter complex CcmAB involved in the biogenesis of c-type cytochromes; once thought to export heme, this seems not to be the case, but its exact role is uncertain. Responsible for energy coupling to the transport system. This Nitrosomonas europaea (strain ATCC 19718 / CIP 103999 / KCTC 2705 / NBRC 14298) protein is Cytochrome c biogenesis ATP-binding export protein CcmA.